We begin with the raw amino-acid sequence, 176 residues long: Ribosome maturation factor RimM (176 aa).

The PRC barrel domain maps to 97-176; that stretch reads EDEFYWRDLI…QIIVDWDPDF (80 aa).

It belongs to the RimM family. Binds ribosomal protein uS19.

Its subcellular location is the cytoplasm. In terms of biological role, an accessory protein needed during the final step in the assembly of 30S ribosomal subunit, possibly for assembly of the head region. Essential for efficient processing of 16S rRNA. May be needed both before and after RbfA during the maturation of 16S rRNA. It has affinity for free ribosomal 30S subunits but not for 70S ribosomes. The chain is Ribosome maturation factor RimM from Shewanella amazonensis (strain ATCC BAA-1098 / SB2B).